The chain runs to 44 residues: Photosystem I reaction center subunit IX (44 aa).

The helical transmembrane segment at 7–27 (YLSTAPVLTTLWFGSLAGLLI) threads the bilayer.

Belongs to the PsaJ family.

The protein localises to the plastid. It is found in the chloroplast thylakoid membrane. Its function is as follows. May help in the organization of the PsaE and PsaF subunits. This Phalaenopsis aphrodite subsp. formosana (Moth orchid) protein is Photosystem I reaction center subunit IX.